The chain runs to 292 residues: Bifunctional protein FolD (292 aa).

Residues 171–173, Ile196, and Ile237 each bind NADP(+); that span reads GAS.

This sequence belongs to the tetrahydrofolate dehydrogenase/cyclohydrolase family. As to quaternary structure, homodimer.

The enzyme catalyses (6R)-5,10-methylene-5,6,7,8-tetrahydrofolate + NADP(+) = (6R)-5,10-methenyltetrahydrofolate + NADPH. It carries out the reaction (6R)-5,10-methenyltetrahydrofolate + H2O = (6R)-10-formyltetrahydrofolate + H(+). Its pathway is one-carbon metabolism; tetrahydrofolate interconversion. Catalyzes the oxidation of 5,10-methylenetetrahydrofolate to 5,10-methenyltetrahydrofolate and then the hydrolysis of 5,10-methenyltetrahydrofolate to 10-formyltetrahydrofolate. The polypeptide is Bifunctional protein FolD (Helicobacter acinonychis (strain Sheeba)).